We begin with the raw amino-acid sequence, 55 residues long: Large ribosomal subunit protein bL33 (55 aa).

Belongs to the bacterial ribosomal protein bL33 family.

In Methylobacterium radiotolerans (strain ATCC 27329 / DSM 1819 / JCM 2831 / NBRC 15690 / NCIMB 10815 / 0-1), this protein is Large ribosomal subunit protein bL33.